A 476-amino-acid chain; its full sequence is Methylenetetrahydrofolate--tRNA-(uracil-5-)-methyltransferase TrmFO (476 aa).

FAD is bound at residue 14-19 (GGGLAG).

This sequence belongs to the MnmG family. TrmFO subfamily. Requires FAD as cofactor.

The protein localises to the cytoplasm. It carries out the reaction uridine(54) in tRNA + (6R)-5,10-methylene-5,6,7,8-tetrahydrofolate + NADH + H(+) = 5-methyluridine(54) in tRNA + (6S)-5,6,7,8-tetrahydrofolate + NAD(+). The enzyme catalyses uridine(54) in tRNA + (6R)-5,10-methylene-5,6,7,8-tetrahydrofolate + NADPH + H(+) = 5-methyluridine(54) in tRNA + (6S)-5,6,7,8-tetrahydrofolate + NADP(+). In terms of biological role, catalyzes the folate-dependent formation of 5-methyl-uridine at position 54 (M-5-U54) in all tRNAs. This chain is Methylenetetrahydrofolate--tRNA-(uracil-5-)-methyltransferase TrmFO, found in Brucella anthropi (strain ATCC 49188 / DSM 6882 / CCUG 24695 / JCM 21032 / LMG 3331 / NBRC 15819 / NCTC 12168 / Alc 37) (Ochrobactrum anthropi).